Consider the following 329-residue polypeptide: Lipoyl synthase (329 aa).

C55, C60, C66, C81, C85, C88, and S292 together coordinate [4Fe-4S] cluster. In terms of domain architecture, Radical SAM core spans 67–281 (WEDREATFLI…KAEAEAIGFL (215 aa)).

It belongs to the radical SAM superfamily. Lipoyl synthase family. It depends on [4Fe-4S] cluster as a cofactor.

The protein localises to the cytoplasm. The enzyme catalyses [[Fe-S] cluster scaffold protein carrying a second [4Fe-4S](2+) cluster] + N(6)-octanoyl-L-lysyl-[protein] + 2 oxidized [2Fe-2S]-[ferredoxin] + 2 S-adenosyl-L-methionine + 4 H(+) = [[Fe-S] cluster scaffold protein] + N(6)-[(R)-dihydrolipoyl]-L-lysyl-[protein] + 4 Fe(3+) + 2 hydrogen sulfide + 2 5'-deoxyadenosine + 2 L-methionine + 2 reduced [2Fe-2S]-[ferredoxin]. Its pathway is protein modification; protein lipoylation via endogenous pathway; protein N(6)-(lipoyl)lysine from octanoyl-[acyl-carrier-protein]: step 2/2. Its function is as follows. Catalyzes the radical-mediated insertion of two sulfur atoms into the C-6 and C-8 positions of the octanoyl moiety bound to the lipoyl domains of lipoate-dependent enzymes, thereby converting the octanoylated domains into lipoylated derivatives. In Clavibacter sepedonicus (Clavibacter michiganensis subsp. sepedonicus), this protein is Lipoyl synthase.